The following is a 277-amino-acid chain: Putative pyruvate, phosphate dikinase regulatory protein (277 aa).

156-163 provides a ligand contact to ADP; the sequence is GVSRTSKT.

It belongs to the pyruvate, phosphate/water dikinase regulatory protein family. PDRP subfamily.

It carries out the reaction N(tele)-phospho-L-histidyl/L-threonyl-[pyruvate, phosphate dikinase] + ADP = N(tele)-phospho-L-histidyl/O-phospho-L-threonyl-[pyruvate, phosphate dikinase] + AMP + H(+). It catalyses the reaction N(tele)-phospho-L-histidyl/O-phospho-L-threonyl-[pyruvate, phosphate dikinase] + phosphate + H(+) = N(tele)-phospho-L-histidyl/L-threonyl-[pyruvate, phosphate dikinase] + diphosphate. Bifunctional serine/threonine kinase and phosphorylase involved in the regulation of the pyruvate, phosphate dikinase (PPDK) by catalyzing its phosphorylation/dephosphorylation. The polypeptide is Putative pyruvate, phosphate dikinase regulatory protein (Carboxydothermus hydrogenoformans (strain ATCC BAA-161 / DSM 6008 / Z-2901)).